A 194-amino-acid polypeptide reads, in one-letter code: Outer-membrane lipoprotein LolB (194 aa).

Positions 1 to 18 (MTLFLRIFTFGCLLLLAG) are cleaved as a signal peptide. The N-palmitoyl cysteine moiety is linked to residue Cys-19. Residue Cys-19 is the site of S-diacylglycerol cysteine attachment.

The protein belongs to the LolB family. As to quaternary structure, monomer.

The protein localises to the cell outer membrane. Functionally, plays a critical role in the incorporation of lipoproteins in the outer membrane after they are released by the LolA protein. In Aeromonas salmonicida (strain A449), this protein is Outer-membrane lipoprotein LolB.